Here is a 107-residue protein sequence, read N- to C-terminus: Inner membrane protein YgbE (107 aa).

At 1–20 (MRNSHNITLTNNDSLTEDEE) the chain is on the cytoplasmic side. The helical transmembrane segment at 21 to 43 (TTWSLPGAVVGFISWLFALAMPM) threads the bilayer. Residues 44–52 (LIYGSNTLF) lie on the Periplasmic side of the membrane. A helical transmembrane segment spans residues 53–75 (FFIYTWPFFLALMPVAVVVGIAL). Residues 76–86 (HSLMDGKLRYS) are Cytoplasmic-facing. A helical membrane pass occupies residues 87 to 106 (IVFTLVTVGIMFGALFMWLL). Position 107 (glycine 107) is a topological domain, periplasmic.

Its subcellular location is the cell inner membrane. This Escherichia coli (strain K12) protein is Inner membrane protein YgbE (ygbE).